A 340-amino-acid chain; its full sequence is Ketol-acid reductoisomerase (NADP(+)) (340 aa).

In terms of domain architecture, KARI N-terminal Rossmann spans methionine 1–threonine 182. Residues tyrosine 24–glutamine 27, arginine 48, serine 51, serine 53, and aspartate 83–glutamine 86 each bind NADP(+). Histidine 108 is a catalytic residue. NADP(+) is bound at residue glycine 134. The region spanning asparagine 183–isoleucine 329 is the KARI C-terminal knotted domain. The Mg(2+) site is built by aspartate 191, glutamate 195, glutamate 227, and glutamate 231. Position 252 (serine 252) interacts with substrate.

The protein belongs to the ketol-acid reductoisomerase family. It depends on Mg(2+) as a cofactor.

The enzyme catalyses (2R)-2,3-dihydroxy-3-methylbutanoate + NADP(+) = (2S)-2-acetolactate + NADPH + H(+). It carries out the reaction (2R,3R)-2,3-dihydroxy-3-methylpentanoate + NADP(+) = (S)-2-ethyl-2-hydroxy-3-oxobutanoate + NADPH + H(+). The protein operates within amino-acid biosynthesis; L-isoleucine biosynthesis; L-isoleucine from 2-oxobutanoate: step 2/4. It participates in amino-acid biosynthesis; L-valine biosynthesis; L-valine from pyruvate: step 2/4. Involved in the biosynthesis of branched-chain amino acids (BCAA). Catalyzes an alkyl-migration followed by a ketol-acid reduction of (S)-2-acetolactate (S2AL) to yield (R)-2,3-dihydroxy-isovalerate. In the isomerase reaction, S2AL is rearranged via a Mg-dependent methyl migration to produce 3-hydroxy-3-methyl-2-ketobutyrate (HMKB). In the reductase reaction, this 2-ketoacid undergoes a metal-dependent reduction by NADPH to yield (R)-2,3-dihydroxy-isovalerate. This chain is Ketol-acid reductoisomerase (NADP(+)), found in Ruegeria sp. (strain TM1040) (Silicibacter sp.).